The following is a 208-amino-acid chain: Uracil phosphoribosyltransferase (208 aa).

5-phospho-alpha-D-ribose 1-diphosphate is bound by residues Arg-78, Arg-103, and 130–138 (DPMLATGGS). Uracil-binding positions include Ile-193 and 198–200 (GDA). Asp-199 is a binding site for 5-phospho-alpha-D-ribose 1-diphosphate.

This sequence belongs to the UPRTase family. Mg(2+) is required as a cofactor.

It catalyses the reaction UMP + diphosphate = 5-phospho-alpha-D-ribose 1-diphosphate + uracil. The protein operates within pyrimidine metabolism; UMP biosynthesis via salvage pathway; UMP from uracil: step 1/1. Its activity is regulated as follows. Allosterically activated by GTP. Catalyzes the conversion of uracil and 5-phospho-alpha-D-ribose 1-diphosphate (PRPP) to UMP and diphosphate. This Escherichia fergusonii (strain ATCC 35469 / DSM 13698 / CCUG 18766 / IAM 14443 / JCM 21226 / LMG 7866 / NBRC 102419 / NCTC 12128 / CDC 0568-73) protein is Uracil phosphoribosyltransferase.